The following is an 84-amino-acid chain: Putative membrane protein insertion efficiency factor (84 aa).

This sequence belongs to the UPF0161 family.

It localises to the cell inner membrane. In terms of biological role, could be involved in insertion of integral membrane proteins into the membrane. In Shewanella pealeana (strain ATCC 700345 / ANG-SQ1), this protein is Putative membrane protein insertion efficiency factor.